Consider the following 247-residue polypeptide: ATP synthase subunit a, chloroplastic (247 aa).

A run of 5 helical transmembrane segments spans residues 38–58 (QVLI…TVAV), 95–115 (VPFI…GALL), 134–154 (INTT…AGLT), 199–219 (LVVV…VMFL), and 220–240 (GLFT…AYIG).

It belongs to the ATPase A chain family. F-type ATPases have 2 components, CF(1) - the catalytic core - and CF(0) - the membrane proton channel. CF(1) has five subunits: alpha(3), beta(3), gamma(1), delta(1), epsilon(1). CF(0) has four main subunits: a, b, b' and c.

The protein resides in the plastid. Its subcellular location is the chloroplast thylakoid membrane. Key component of the proton channel; it plays a direct role in the translocation of protons across the membrane. In Platanus occidentalis (Sycamore), this protein is ATP synthase subunit a, chloroplastic.